Consider the following 115-residue polypeptide: Non-specific lipid-transfer protein Cor a 8.0101 (115 aa).

A signal peptide spans 1 to 23; that stretch reads MGSLKLVCAVLLCMMVAAPVARA. 4 disulfides stabilise this stretch: C27–C74, C37–C51, C52–C97, and C72–C111.

The protein belongs to the plant LTP family. In terms of assembly, monomer. As to expression, expressed in seed (at protein level). Expressed in seed.

Plant non-specific lipid-transfer proteins transfer phospholipids as well as galactolipids across membranes. May play a role in wax or cutin deposition in the cell walls of expanding epidermal cells and certain secretory tissues. The protein is Non-specific lipid-transfer protein Cor a 8.0101 of Corylus avellana (European hazel).